A 428-amino-acid polypeptide reads, in one-letter code: GTPase Obg (428 aa).

The Obg domain maps to 1 to 158; the sequence is MFIDTAKIFV…RWVALELKLL (158 aa). The 173-residue stretch at 159-331 folds into the OBG-type G domain; the sequence is ADVGLLGFPN…VIKEAARMLK (173 aa). Residues 165-172, 190-194, 212-215, 282-285, and 312-314 contribute to the GTP site; these read GFPNVGKS, FTTLK, DVPG, NKCD, and SAA. Residues S172 and T192 each coordinate Mg(2+). The OCT domain occupies 345 to 428; sequence RFIPEDKKFT…LNDFEFEYLL (84 aa).

This sequence belongs to the TRAFAC class OBG-HflX-like GTPase superfamily. OBG GTPase family. Monomer. It depends on Mg(2+) as a cofactor.

Its subcellular location is the cytoplasm. In terms of biological role, an essential GTPase which binds GTP, GDP and possibly (p)ppGpp with moderate affinity, with high nucleotide exchange rates and a fairly low GTP hydrolysis rate. Plays a role in control of the cell cycle, stress response, ribosome biogenesis and in those bacteria that undergo differentiation, in morphogenesis control. The sequence is that of GTPase Obg from Clostridium perfringens (strain ATCC 13124 / DSM 756 / JCM 1290 / NCIMB 6125 / NCTC 8237 / Type A).